Reading from the N-terminus, the 821-residue chain is Xylosyltransferase 1 (821 aa).

Residues 1-121 (YFSHRPKEKV…PETKSDQVPK (121 aa)) form a disordered region. Residues 1–821 (YFSHRPKEKV…GAVKPDGRLR (821 aa)) are Lumenal-facing. Residues 9-25 (KVRTDSNNENSVPKDFE) are compositionally biased toward basic and acidic residues. Residues 27–36 (VDNSNFAPRT) are compositionally biased toward polar residues. Composition is skewed to basic and acidic residues over residues 41–58 (HQPE…ERLQ) and 76–87 (GPKEVLPPREKA). N90 carries N-linked (GlcNAc...) asparagine glycosylation. Intrachain disulfides connect C122–C150, C166–C407, C426–C439, and C428–C437. UDP-alpha-D-xylose-binding positions include V198, D226, and 255 to 257 (TIW). An N-linked (GlcNAc...) asparagine glycan is attached at N286. UDP-alpha-D-xylose is bound at residue 359–360 (DW). UDP-alpha-D-xylose-binding positions include S440 and 463 to 464 (RK). 2 disulfide bridges follow: C540/C789 and C782/C795. A glycan (N-linked (GlcNAc...) asparagine) is linked at N642. The interval 801 to 821 (SSFSPDPKSELGAVKPDGRLR) is disordered.

The protein belongs to the glycosyltransferase 14 family. XylT subfamily. In terms of assembly, monomer. The cofactor is a divalent metal cation. Contains 7 disulfide bonds. Post-translationally, N-glycosylated.

It is found in the golgi apparatus membrane. It carries out the reaction UDP-alpha-D-xylose + L-seryl-[protein] = 3-O-(beta-D-xylosyl)-L-seryl-[protein] + UDP + H(+). It functions in the pathway glycan metabolism; chondroitin sulfate biosynthesis. The protein operates within glycan metabolism; heparan sulfate biosynthesis. In terms of biological role, catalyzes the first step in the biosynthesis of chondroitin sulfate and dermatan sulfate proteoglycans, such as DCN. Transfers D-xylose from UDP-D-xylose to specific serine residues of the core protein. Required for normal maturation of chondrocytes during bone development, normal onset of ossification and normal embryonic and postnatal skeleton development, especially of the long bones. This chain is Xylosyltransferase 1 (Xylt1), found in Rattus norvegicus (Rat).